The following is a 318-amino-acid chain: Small ribosomal subunit protein mS26 (318 aa).

A disordered region spans residues 295–318 (IDSKLNPTSNGAGNNGNNNNTTNL). Low complexity predominate over residues 300–318 (NPTSNGAGNNGNNNNTTNL).

This sequence belongs to the mitochondrion-specific ribosomal protein mS26 family. Component of the mitochondrial small ribosomal subunit (mt-SSU). Mature yeast 74S mitochondrial ribosomes consist of a small (37S) and a large (54S) subunit. The 37S small subunit contains a 15S ribosomal RNA (15S mt-rRNA) and 34 different proteins. The 54S large subunit contains a 21S rRNA (21S mt-rRNA) and 46 different proteins.

It is found in the mitochondrion. Its function is as follows. Component of the mitochondrial ribosome (mitoribosome), a dedicated translation machinery responsible for the synthesis of mitochondrial genome-encoded proteins, including at least some of the essential transmembrane subunits of the mitochondrial respiratory chain. The mitoribosomes are attached to the mitochondrial inner membrane and translation products are cotranslationally integrated into the membrane. In Saccharomyces cerevisiae (strain ATCC 204508 / S288c) (Baker's yeast), this protein is Small ribosomal subunit protein mS26 (PET123).